A 129-amino-acid chain; its full sequence is Small ribosomal subunit protein uS11 (129 aa).

This sequence belongs to the universal ribosomal protein uS11 family. In terms of assembly, part of the 30S ribosomal subunit. Interacts with proteins S7 and S18. Binds to IF-3.

Located on the platform of the 30S subunit, it bridges several disparate RNA helices of the 16S rRNA. Forms part of the Shine-Dalgarno cleft in the 70S ribosome. This chain is Small ribosomal subunit protein uS11, found in Mesorhizobium japonicum (strain LMG 29417 / CECT 9101 / MAFF 303099) (Mesorhizobium loti (strain MAFF 303099)).